The following is a 669-amino-acid chain: Small ribosomal subunit protein mS39 (669 aa).

The N-terminal 13 residues, 1–13 (MAAPCVRLGSVRC), are a transit peptide targeting the mitochondrion. 11 PPR repeats span residues 129–163 (IEGV…GTAP), 164–199 (SLET…DDQD), 209–239 (RPGQ…MPER), 240–274 (NAHS…RLTA), 275–314 (DVQT…NVRP), 315–351 (NLLT…NIEP), 352–392 (SLGT…FTLR), 396–430 (DVYF…DNRG), 438–472 (QSTY…LYYP), 473–507 (NSRG…GHSN), and 556–590 (SSAS…HRVP). The interval 186-218 (DIQTSEQNQQDDQDQQETEDSKKRPGQYRKASE) is disordered. Acidic residues predominate over residues 194 to 203 (QQDDQDQQET). A disordered region spans residues 648 to 669 (EDLQKSHSSSSSSSESSDSDRE). The segment covering 653–663 (SHSSSSSSSES) has biased composition (low complexity).

This sequence belongs to the mitochondrion-specific ribosomal protein mS39 family.

It localises to the mitochondrion. Its function is as follows. Mitochondrial protein that may have a role in mitochondrial translation. This is Small ribosomal subunit protein mS39 (ptcd3) from Xenopus laevis (African clawed frog).